The sequence spans 74 residues: Anaphase-promoting complex subunit 13 (74 aa).

A disordered region spans residues 33 to 53 (LNELPDPEQDNGGTTESVKEQ).

It belongs to the APC13 family. As to quaternary structure, the mammalian APC/C is composed at least of 14 distinct subunits ANAPC1, ANAPC2, CDC27/APC3, ANAPC4, ANAPC5, CDC16/APC6, ANAPC7, CDC23/APC8, ANAPC10, ANAPC11, CDC26/APC12, ANAPC13, ANAPC15 and ANAPC16 that assemble into a complex of at least 19 chains with a combined molecular mass of around 1.2 MDa; APC/C interacts with FZR1 and FBXO5.

It is found in the nucleus. It participates in protein modification; protein ubiquitination. In terms of biological role, component of the anaphase promoting complex/cyclosome (APC/C), a cell cycle-regulated E3 ubiquitin ligase that controls progression through mitosis and the G1 phase of the cell cycle. The APC/C complex acts by mediating ubiquitination and subsequent degradation of target proteins: it mainly mediates the formation of 'Lys-11'-linked polyubiquitin chains and, to a lower extent, the formation of 'Lys-48'- and 'Lys-63'-linked polyubiquitin chains. The APC/C complex catalyzes assembly of branched 'Lys-11'-/'Lys-48'-linked branched ubiquitin chains on target proteins. This chain is Anaphase-promoting complex subunit 13 (ANAPC13), found in Pongo abelii (Sumatran orangutan).